The chain runs to 255 residues: Aliphatic sulfonates import ATP-binding protein SsuB (255 aa).

The region spanning 5-231 is the ABC transporter domain; the sequence is IRVNEKAFGK…PRSRTSPVFQ (227 aa). 39-46 is a binding site for ATP; the sequence is GPSGCGKS.

The protein belongs to the ABC transporter superfamily. Aliphatic sulfonates importer (TC 3.A.1.17.2) family. As to quaternary structure, the complex is composed of two ATP-binding proteins (SsuB), two transmembrane proteins (SsuC) and a solute-binding protein (SsuA).

The protein localises to the cell membrane. It catalyses the reaction ATP + H2O + aliphatic sulfonate-[sulfonate-binding protein]Side 1 = ADP + phosphate + aliphatic sulfonateSide 2 + [sulfonate-binding protein]Side 1.. Part of the ABC transporter complex SsuABC involved in aliphatic sulfonates import. Responsible for energy coupling to the transport system. This is Aliphatic sulfonates import ATP-binding protein SsuB from Bacillus licheniformis (strain ATCC 14580 / DSM 13 / JCM 2505 / CCUG 7422 / NBRC 12200 / NCIMB 9375 / NCTC 10341 / NRRL NRS-1264 / Gibson 46).